The sequence spans 194 residues: Peptidyl-tRNA hydrolase (194 aa).

Y16 provides a ligand contact to tRNA. H21 serves as the catalytic Proton acceptor. Residues F67, N69, and N115 each contribute to the tRNA site.

Belongs to the PTH family. As to quaternary structure, monomer.

It is found in the cytoplasm. The enzyme catalyses an N-acyl-L-alpha-aminoacyl-tRNA + H2O = an N-acyl-L-amino acid + a tRNA + H(+). Functionally, hydrolyzes ribosome-free peptidyl-tRNAs (with 1 or more amino acids incorporated), which drop off the ribosome during protein synthesis, or as a result of ribosome stalling. Catalyzes the release of premature peptidyl moieties from peptidyl-tRNA molecules trapped in stalled 50S ribosomal subunits, and thus maintains levels of free tRNAs and 50S ribosomes. The protein is Peptidyl-tRNA hydrolase of Shigella dysenteriae serotype 1 (strain Sd197).